Reading from the N-terminus, the 131-residue chain is Aspartate 1-decarboxylase (131 aa).

The active-site Schiff-base intermediate with substrate; via pyruvic acid is Ser-25. Ser-25 bears the Pyruvic acid (Ser) mark. A substrate-binding site is contributed by Thr-57. The active-site Proton donor is the Tyr-58. Position 73–75 (73–75 (GAA)) interacts with substrate.

Belongs to the PanD family. Heterooctamer of four alpha and four beta subunits. Pyruvate serves as cofactor. Is synthesized initially as an inactive proenzyme, which is activated by self-cleavage at a specific serine bond to produce a beta-subunit with a hydroxyl group at its C-terminus and an alpha-subunit with a pyruvoyl group at its N-terminus.

It localises to the cytoplasm. The catalysed reaction is L-aspartate + H(+) = beta-alanine + CO2. It participates in cofactor biosynthesis; (R)-pantothenate biosynthesis; beta-alanine from L-aspartate: step 1/1. In terms of biological role, catalyzes the pyruvoyl-dependent decarboxylation of aspartate to produce beta-alanine. This is Aspartate 1-decarboxylase from Anaeromyxobacter sp. (strain Fw109-5).